The chain runs to 324 residues: MPEQIIVIAMAVSFLITVILSPLFIPFLRRLKFGQSIREEGPKSHQKKSGTPTMGGIMILLSIIATTVWVTAKFSVLSAGTYLLLFVTIGYGVLGFLDDMIKVVMKRNLGLTSRQKFIGQLIIAVIFFFVYRQSGFSTALHIPGTDWSFDLGWAYGVLLLFMLVGGSNAVNLTDGLDGLLAGTAAIAFGAYAVLAWNQGQYDVAVFCVAVVGAVLGFLVFNAHPAKVFMGDTGSLALGGAIAAVAVLTKLELLLVVIGGVFVIETLSVIIQVASFKMTGKRVFRMSPLHHHYELVGWSEWRIVVTFWAVGLLFAMLGIYIEVWI.

Transmembrane regions (helical) follow at residues 5-25 (IIVI…PLFI), 52-72 (PTMG…WVTA), 76-96 (VLSA…VLGF), 117-137 (FIGQ…SGFS), 147-167 (WSFD…VGGS), 176-196 (LDGL…VLAW), 203-223 (VAVF…FNAH), 227-247 (VFMG…VAVL), 250-270 (LELL…SVII), and 302-322 (IVVT…YIEV).

It belongs to the glycosyltransferase 4 family. MraY subfamily. The cofactor is Mg(2+).

The protein resides in the cell membrane. The catalysed reaction is UDP-N-acetyl-alpha-D-muramoyl-L-alanyl-gamma-D-glutamyl-meso-2,6-diaminopimeloyl-D-alanyl-D-alanine + di-trans,octa-cis-undecaprenyl phosphate = di-trans,octa-cis-undecaprenyl diphospho-N-acetyl-alpha-D-muramoyl-L-alanyl-D-glutamyl-meso-2,6-diaminopimeloyl-D-alanyl-D-alanine + UMP. It participates in cell wall biogenesis; peptidoglycan biosynthesis. Catalyzes the initial step of the lipid cycle reactions in the biosynthesis of the cell wall peptidoglycan: transfers peptidoglycan precursor phospho-MurNAc-pentapeptide from UDP-MurNAc-pentapeptide onto the lipid carrier undecaprenyl phosphate, yielding undecaprenyl-pyrophosphoryl-MurNAc-pentapeptide, known as lipid I. In Geobacillus thermodenitrificans (strain NG80-2), this protein is Phospho-N-acetylmuramoyl-pentapeptide-transferase.